The following is a 137-amino-acid chain: NADPH-dependent 7-cyano-7-deazaguanine reductase (137 aa).

The active-site Thioimide intermediate is the C50. D57 serves as the catalytic Proton donor. Residues 72–74 (VEL) and 91–92 (HE) each bind substrate.

It belongs to the GTP cyclohydrolase I family. QueF type 1 subfamily.

It localises to the cytoplasm. It carries out the reaction 7-aminomethyl-7-carbaguanine + 2 NADP(+) = 7-cyano-7-deazaguanine + 2 NADPH + 3 H(+). The protein operates within tRNA modification; tRNA-queuosine biosynthesis. In terms of biological role, catalyzes the NADPH-dependent reduction of 7-cyano-7-deazaguanine (preQ0) to 7-aminomethyl-7-deazaguanine (preQ1). This Synechocystis sp. (strain ATCC 27184 / PCC 6803 / Kazusa) protein is NADPH-dependent 7-cyano-7-deazaguanine reductase.